Here is a 93-residue protein sequence, read N- to C-terminus: Small ribosomal subunit protein uS19 (93 aa).

It belongs to the universal ribosomal protein uS19 family.

Functionally, protein S19 forms a complex with S13 that binds strongly to the 16S ribosomal RNA. The protein is Small ribosomal subunit protein uS19 of Nitratidesulfovibrio vulgaris (strain DSM 19637 / Miyazaki F) (Desulfovibrio vulgaris).